A 79-amino-acid chain; its full sequence is Cytoinsectotoxin-3 (79 aa).

The protein belongs to the cationic peptide 06 (cytoinsectotoxin) family. Expressed by the venom gland.

Its subcellular location is the secreted. Functionally, insecticidal and antimicrobial peptide. Has insecticidal activity against larvae of flesh fly S.carnaria. Has antibacterial activity against Gram-positive bacterium B.subtilis B-501 (MIC=0.63 uM) and Gram-negative bacterium E.coli DH5alpha (MIC=2.5 uM). The chain is Cytoinsectotoxin-3 from Lachesana tarabaevi (Spider).